We begin with the raw amino-acid sequence, 86 residues long: Photosystem I reaction center subunit PsaK (86 aa).

The next 2 helical transmembrane spans lie at 15–35 (SWSISTAIIMVICNLLCIGLG) and 57–77 (GLPELLATTSLGHIIGAGAII).

The protein belongs to the PsaG/PsaK family.

It is found in the plastid. The protein localises to the chloroplast thylakoid membrane. This is Photosystem I reaction center subunit PsaK from Gracilaria tenuistipitata var. liui (Red alga).